The following is a 250-amino-acid chain: Putative HTH-type transcriptional regulatory protein PAE1627 (250 aa).

Positions 129 to 183 (LRAKRQQAGLSLGTLATNLGVTRETVYRYERGEIEAPLKIAEKLINMFGEDITKK) constitute an HTH cro/C1-type domain. Residues 140-159 (LGTLATNLGVTRETVYRYER) constitute a DNA-binding region (H-T-H motif).

The protein is Putative HTH-type transcriptional regulatory protein PAE1627 of Pyrobaculum aerophilum (strain ATCC 51768 / DSM 7523 / JCM 9630 / CIP 104966 / NBRC 100827 / IM2).